We begin with the raw amino-acid sequence, 102 residues long: Hemoglobin subunit beta-Z (102 aa).

The Globin domain maps to 1 to 102; that stretch reads FGNLSSAQAI…VANALSHKYH (102 aa). Heme b-binding residues include histidine 19 and histidine 48.

It belongs to the globin family. Heterotetramer of two alpha chains and two beta chains.

Functionally, this is an embryonic beta chain. This Mesocricetus auratus (Golden hamster) protein is Hemoglobin subunit beta-Z (HBBZ).